Here is a 400-residue protein sequence, read N- to C-terminus: Enoyl-[acyl-carrier-protein] reductase [NADH] (400 aa).

Residues Gly48–Tyr53, Phe74–Glu75, Asp111–Ala112, and Leu139–Ala140 contribute to the NAD(+) site. Residue Tyr225 participates in substrate binding. The active-site Proton donor is the Tyr235. NAD(+) contacts are provided by residues Lys244 and Val273–Thr275.

The protein belongs to the TER reductase family. As to quaternary structure, monomer.

The enzyme catalyses a 2,3-saturated acyl-[ACP] + NAD(+) = a (2E)-enoyl-[ACP] + NADH + H(+). It functions in the pathway lipid metabolism; fatty acid biosynthesis. Involved in the final reduction of the elongation cycle of fatty acid synthesis (FAS II). Catalyzes the reduction of a carbon-carbon double bond in an enoyl moiety that is covalently linked to an acyl carrier protein (ACP). This chain is Enoyl-[acyl-carrier-protein] reductase [NADH], found in Marinomonas sp. (strain MWYL1).